The chain runs to 579 residues: Vitamin B6 transporter TPN1 (579 aa).

The Cytoplasmic segment spans residues 1–98; sequence MNRDNMDTTK…LHVAGLWLSA (98 aa). The chain crosses the membrane as a helical span at residues 99-119; that stretch reads TGGLSSMSSFLLGPLLFGLSF. The Extracellular segment spans residues 120-122; sequence RES. Residues 123–143 form a helical membrane-spanning segment; that stretch reads VASSLISVTIGCLIAAYCSIM. The Cytoplasmic segment spans residues 144–157; it reads GPQSGCRQMVTARY. Residues 158–178 form a helical membrane-spanning segment; the sequence is LFGWWFVKLVALASIIGVMGW. Topologically, residues 179 to 198 are extracellular; sequence SVVNSVVGGEMLAAISNDKV. The helical transmembrane segment at 199 to 219 threads the bilayer; sequence PLWVGIVIVTVCSFLVAIFGI. The Cytoplasmic segment spans residues 220 to 221; it reads KQ. The helical transmembrane segment at 222 to 242 threads the bilayer; sequence VIKVETYLSVPVLTAFLLLYI. Residues 243-274 are Extracellular-facing; sequence SSSDKYSFVNAYVSKGNLDSSTRKGNWMSFFS. A helical transmembrane segment spans residues 275-295; that stretch reads LCYSITATWGSITADYYILFP. Residues 296–302 are Cytoplasmic-facing; the sequence is EDTPYIQ. A helical membrane pass occupies residues 303–323; sequence IFCLTFFGTFLPTCFVGILGL. At 324–362 the chain is on the extracellular side; that stretch reads LLASVAMSYKPWSVEYDSHGMGGLLWAGFQRWNGFGKFC. The chain crosses the membrane as a helical span at residues 363-383; that stretch reads VVVLVFSLVSNNIINTYSAAF. The Cytoplasmic segment spans residues 384–394; sequence SIQLSSVFCAK. The chain crosses the membrane as a helical span at residues 395-415; sequence IPRWFWSIVCTIICLVCALIG. Residues 416–421 are Extracellular-facing; sequence RNHFST. Residues 422 to 442 form a helical membrane-spanning segment; that stretch reads ILGNFLPMIGYWISMYFILLF. The Cytoplasmic segment spans residues 443 to 519; it reads EENLVFRRFF…EVLTHGYAAT (77 aa). A helical membrane pass occupies residues 520 to 540; it reads FAFIVGVAGVVVGMAQAYWIG. The Extracellular segment spans residues 541-545; the sequence is PIAAK. A helical transmembrane segment spans residues 546–566; that stretch reads FGEYGGDVAMWLSMAFSGVVY. Topologically, residues 567-579 are cytoplasmic; that stretch reads PPCRYLELRKFGR.

Belongs to the purine-cytosine permease (2.A.39) family.

The protein resides in the membrane. In terms of biological role, thiamine-regulated, high affinity import carrier of pyridoxine, pyridoxal and pyridoxamine. This chain is Vitamin B6 transporter TPN1 (TPN1), found in Saccharomyces cerevisiae (strain ATCC 204508 / S288c) (Baker's yeast).